Here is a 1400-residue protein sequence, read N- to C-terminus: Clustered mitochondria protein homolog (1400 aa).

3 disordered regions span residues 1–39 (MVSK…KEAS), 56–78 (GHDQ…QAED), and 212–243 (GDTG…KERP). Residues 56-69 (GHDQAEEADSKQDG) are compositionally biased toward basic and acidic residues. The region spanning 380–622 (RAEDAYTSRL…RTFPPDLNFL (243 aa)) is the Clu domain. The interval 684–741 (AALQDSNAAGAGSENKPLALESCDGTPDSPTSSESTLTPEDSEATTVSENSSAENQEA) is disordered. Residues 707-722 (DGTPDSPTSSESTLTP) show a composition bias toward low complexity. Residues 727–741 (ATTVSENSSAENQEA) are compositionally biased toward polar residues. TPR repeat units lie at residues 1088–1121 (AFHF…FNNV), 1130–1163 (CACL…SERV), 1172–1205 (IQEY…MLVV), and 1214–1247 (ALLD…NTKY). Polar residues predominate over residues 1377–1388 (QDSGKIQEQQGS). The interval 1377–1400 (QDSGKIQEQQGSHLELDDKLPVDD) is disordered. Positions 1390–1400 (LELDDKLPVDD) are enriched in basic and acidic residues.

This sequence belongs to the CLU family.

It localises to the cytoplasm. Its function is as follows. mRNA-binding protein involved in proper cytoplasmic distribution of mitochondria. This Danio rerio (Zebrafish) protein is Clustered mitochondria protein homolog.